The chain runs to 400 residues: Argininosuccinate synthase (400 aa).

Residues 10–18 (AYSGGVDTS) and Ala38 contribute to the ATP site. Residue Tyr89 participates in L-citrulline binding. Gly119 contributes to the ATP binding site. L-aspartate is bound by residues Thr121, Asn125, and Asp126. Residue Asn125 coordinates L-citrulline. L-citrulline is bound by residues Arg129, Ser177, Ser186, Glu262, and Tyr274.

The protein belongs to the argininosuccinate synthase family. Type 1 subfamily. Homotetramer.

The protein resides in the cytoplasm. The catalysed reaction is L-citrulline + L-aspartate + ATP = 2-(N(omega)-L-arginino)succinate + AMP + diphosphate + H(+). It functions in the pathway amino-acid biosynthesis; L-arginine biosynthesis; L-arginine from L-ornithine and carbamoyl phosphate: step 2/3. The sequence is that of Argininosuccinate synthase from Prochlorococcus marinus (strain NATL2A).